The following is a 314-amino-acid chain: Malate dehydrogenase (314 aa).

NAD(+) contacts are provided by residues 7 to 13 (GAAGGIG) and Asp-34. Residues Arg-81 and Arg-87 each coordinate substrate. NAD(+)-binding positions include Asn-94 and 117–119 (ITN). 2 residues coordinate substrate: Asn-119 and Arg-153. His-177 serves as the catalytic Proton acceptor. Met-230 is an NAD(+) binding site.

The protein belongs to the LDH/MDH superfamily. MDH type 1 family. Homodimer.

The enzyme catalyses (S)-malate + NAD(+) = oxaloacetate + NADH + H(+). In terms of biological role, catalyzes the reversible oxidation of malate to oxaloacetate. The sequence is that of Malate dehydrogenase from Glaesserella parasuis serovar 5 (strain SH0165) (Haemophilus parasuis).